Here is an 875-residue protein sequence, read N- to C-terminus: Phospholipase DDHD1 (875 aa).

Disordered regions lie at residues 1–30, 101–153, and 206–231; these read MNYP…LGSD, LRYY…GAAA, and RAQD…SVED. 2 positions are modified to phosphoserine: S8 and S11. A compositionally biased stretch (gly residues) spans 130 to 140; it reads SGGGGAAGGGP. Residues 217 to 228 show a composition bias toward low complexity; the sequence is GPASPAGPASSS. The active site involves S540. Positions 614-861 constitute a DDHD domain; it reads LKFKVENFFC…ALFLLTFMYK (248 aa). Residue S726 is modified to Phosphoserine. Positions 770 to 804 are disordered; that stretch reads RSSASQPSETSRDSIEDEKKPVASPPMTTVATQTL. Residues 779 to 790 are compositionally biased toward basic and acidic residues; the sequence is TSRDSIEDEKKP. The segment covering 795-804 has biased composition (polar residues); it reads PMTTVATQTL.

Belongs to the PA-PLA1 family. As to quaternary structure, forms homooligomers and, to a much smaller extent, heterooligomers with DDHD2. Interacts with SEC23A and SEC24C. In terms of tissue distribution, expressed in mature testis.

The protein localises to the cytoplasm. It carries out the reaction a 1,2-diacyl-sn-glycero-3-phosphate + H2O = a 2-acyl-sn-glycerol 3-phosphate + a fatty acid + H(+). It catalyses the reaction a 1,2-diacyl-sn-glycero-3-phospho-(1D-myo-inositol) + H2O = a 2-acyl-sn-glycero-3-phospho-D-myo-inositol + a fatty acid + H(+). The catalysed reaction is 1-octadecanoyl-2-(5Z,8Z,11Z,14Z-eicosatetraenoyl)-sn-glycero-3-phospho-(1D-myo-inositol) + H2O = 2-(5Z,8Z,11Z,14Z-eicosatetraenoyl)-sn-glycero-3-phospho-(1D-myo-inositol) + octadecanoate + H(+). The enzyme catalyses a 1-acyl-2-(5Z,8Z,11Z,14Z-eicosatetraenoyl)-sn-glycero-3-phospho-(1D-myo-inositol) + H2O = 2-(5Z,8Z,11Z,14Z-eicosatetraenoyl)-sn-glycero-3-phospho-(1D-myo-inositol) + a fatty acid + H(+). It carries out the reaction 1,2-dihexadecanoyl-sn-glycero-3-phospho-(1D-myo-inositol) + H2O = 2-hexadecanoyl-sn-glycero-3-phospho-(1D-myo-inositol) + hexadecanoate + H(+). It catalyses the reaction 1,2-di-(9Z-octadecenoyl)-sn-glycero-3-phosphate + H2O = 2-(9Z-octadecenoyl)-sn-glycero-3-phosphate + (9Z)-octadecenoate + H(+). The catalysed reaction is a 1-acyl-2-(5Z,8Z,11Z,14Z)-eicosatetraenoyl-sn-glycero-3-phosphate + H2O = 2-(5Z,8Z,11Z,14Z-eicosatetraenoyl)-sn-glycero-3-phosphate + a fatty acid + H(+). The enzyme catalyses 1-hexadecanoyl-2-(9Z-octadecenoyl)-sn-glycero-3-phosphate + H2O = 2-(9Z-octadecenoyl)-sn-glycero-3-phosphate + hexadecanoate + H(+). It carries out the reaction 1-hexadecanoyl-2-(9Z-octadecenoyl)-sn-glycero-3-phospho-L-serine + H2O = 2-(9Z-octadecenoyl)-sn-glycero-3-phospho-L-serine + hexadecanoate + H(+). It catalyses the reaction 1,2-di-(5Z,8Z,11Z,14Z)-eicosatetraenoyl-sn-glycero-3-phosphate + H2O = 2-(5Z,8Z,11Z,14Z-eicosatetraenoyl)-sn-glycero-3-phosphate + (5Z,8Z,11Z,14Z)-eicosatetraenoate + H(+). The catalysed reaction is 1-octadecanoyl-2-(5Z,8Z,11Z,14Z-eicosatetraenoyl)-sn-glycero-3-phosphate + H2O = 2-(5Z,8Z,11Z,14Z-eicosatetraenoyl)-sn-glycero-3-phosphate + octadecanoate + H(+). The enzyme catalyses a 1,2-diacyl-sn-glycero-3-phosphocholine + H2O = a 2-acyl-sn-glycero-3-phosphocholine + a fatty acid + H(+). It carries out the reaction a 1,2-diacyl-sn-glycero-3-phosphoethanolamine + H2O = a 2-acyl-sn-glycero-3-phosphoethanolamine + a fatty acid + H(+). It catalyses the reaction a 1,2-diacyl-sn-glycero-3-phospho-L-serine + H2O = a 2-acyl-sn-glycero-3-phospho-L-serine + a fatty acid + H(+). The catalysed reaction is a 1,2-diacyl-sn-glycero-3-phospho-(1'-sn-glycerol) + H2O = 2-acyl-sn-glycero-3-phospho-(1'-sn-glycerol) + a fatty acid + H(+). The enzyme catalyses 1-hexadecanoyl-2-(9Z-octadecenoyl)-sn-glycero-3-phospho-(1'-sn-glycerol) + H2O = 2-(9Z-octadecenoyl)-sn-glycero-3-phospho-(1'-sn-glycerol) + hexadecanoate + H(+). It carries out the reaction 1-acyl-2-(5Z,8Z,11Z,14Z-eicosatetraenoyl)-sn-glycero-3-phosphocholine + H2O = 2-(5Z,8Z,11Z,14Z)-eicosatetraenoyl-sn-glycero-3-phosphocholine + a fatty acid + H(+). It catalyses the reaction 1-acyl-2-(5Z,8Z,11Z,14Z)-eicosatetraenoyl-sn-glycero-3-phosphoethanolamine + H2O = 2-(5Z,8Z,11Z,14Z)-eicosatetraenoyl-sn-glycero-3-phosphoethanolamine + a fatty acid + H(+). The catalysed reaction is 1-(9Z-octadecenoyl)-2-(7Z,10Z,13Z,16Z,19Z-docosapentaenoyl)-sn-glycero-3-phospho-1D-myo-inositol + H2O = 2-(7Z,10Z,13Z,16Z,19Z-docosapentaenoyl)-sn-glycero-3-phospho-1D-myo-inositol + (9Z)-octadecenoate + H(+). The enzyme catalyses 1-(9Z-octadecenoyl)-2-(5Z,8Z,11Z,14Z-eicosatetraenoyl)-sn-glycero-3-phospho-1D-myo-inositol + H2O = 2-(5Z,8Z,11Z,14Z-eicosatetraenoyl)-sn-glycero-3-phospho-(1D-myo-inositol) + (9Z)-octadecenoate + H(+). It carries out the reaction 1,2-di-(9Z-octadecenoyl)-sn-glycero-3-phospho-1D-myo-inositol + H2O = 2-(9Z-octadecenoyl)-sn-glycero-3-phospho-1D-myo-inositol + (9Z)-octadecenoate + H(+). It catalyses the reaction 1-(9Z-octadecenoyl)-2-(8Z,11Z,14Z-eicosatrienoyl)-sn-glycero-3-phospho-1D-myo-inositol + H2O = 2-(8Z,11Z,14Z-eicosatrienoyl)-sn-glycero-3-phospho-1D-myo-inositol + (9Z)-octadecenoate + H(+). The catalysed reaction is 1,2-di-(9Z-octadecenoyl)-sn-glycero-3-phosphocholine + H2O = (9Z-octadecenoyl)-sn-glycero-3-phosphocholine + (9Z)-octadecenoate + H(+). Its pathway is phospholipid metabolism; phosphatidylinositol metabolism. Functionally, phospholipase A1 (PLA1) that hydrolyzes ester bonds at the sn-1 position of glycerophospholipids producing a free fatty acid and a lysophospholipid. Prefers phosphatidate (1,2-diacyl-sn-glycero-3-phosphate, PA) as substrate in vitro, but can efficiently hydrolyze phosphatidylinositol (1,2-diacyl-sn-glycero-3-phospho-(1D-myo-inositol), PI), as well as a range of other glycerophospholipid substrates such as phosphatidylcholine (1,2-diacyl-sn-glycero-3-phosphocholine, PC), phosphatidylethanolamine (1,2-diacyl-sn-glycero-3-phosphoethanolamine, PE), phosphatidylserine (1,2-diacyl-sn-glycero-3-phospho-L-serine, PS) and phosphatidylglycerol (1,2-diacyl-sn-glycero-3-phospho-(1'-sn-glycerol), PG). Involved in the regulation of the endogenous content of polyunsaturated PI and PS lipids in the nervous system. Changes in these lipids extend to downstream metabolic products like PI phosphates PIP and PIP2, which play fundamental roles in cell biology. Regulates mitochondrial morphology. These dynamic changes may be due to PA hydrolysis at the mitochondrial surface. May play a regulatory role in spermatogenesis or sperm function. The sequence is that of Phospholipase DDHD1 (DDHD1) from Bos taurus (Bovine).